The sequence spans 249 residues: RNA-free ribonuclease P (249 aa).

The interval 226–249 (NENEPEYENRDKSKEGSSGEIEFI) is disordered. Basic and acidic residues predominate over residues 232–242 (YENRDKSKEGS).

The protein belongs to the HARP family.

It carries out the reaction Endonucleolytic cleavage of RNA, removing 5'-extranucleotides from tRNA precursor.. In terms of biological role, RNA-free RNase P that catalyzes the removal of the 5'-leader sequence from pre-tRNA to produce the mature 5'-terminus. The polypeptide is RNA-free ribonuclease P (Methanosarcina barkeri (strain Fusaro / DSM 804)).